The chain runs to 197 residues: Adenylate kinase (197 aa).

12 to 17 contributes to the ATP binding site; the sequence is GSGKTT. The interval 34–63 is NMP; it reads STGDMLREEVASGSELGKTIESYIAKGALV. Residues Thr-35, Arg-40, 61-63, 88-91, and Gln-95 contribute to the AMP site; these read ALV and GYPR. Residues 130 to 144 form an LID region; it reads GRRAEAAPGEERSDD. An ATP-binding site is contributed by Arg-131. The AMP site is built by Arg-141 and Arg-152. Residue Arg-180 participates in ATP binding.

The protein belongs to the adenylate kinase family. As to quaternary structure, monomer.

Its subcellular location is the cytoplasm. The enzyme catalyses AMP + ATP = 2 ADP. It participates in purine metabolism; AMP biosynthesis via salvage pathway; AMP from ADP: step 1/1. Its function is as follows. Catalyzes the reversible transfer of the terminal phosphate group between ATP and AMP. Plays an important role in cellular energy homeostasis and in adenine nucleotide metabolism. The sequence is that of Adenylate kinase from Sulfurovum sp. (strain NBC37-1).